A 247-amino-acid chain; its full sequence is Probable transcriptional regulatory protein LAF_0541 (247 aa).

The tract at residues 1–22 (MSGHSKWHNIQGRKNAQDAKRG) is disordered.

The protein belongs to the TACO1 family.

It is found in the cytoplasm. In Limosilactobacillus fermentum (strain NBRC 3956 / LMG 18251) (Lactobacillus fermentum), this protein is Probable transcriptional regulatory protein LAF_0541.